Reading from the N-terminus, the 296-residue chain is NAD kinase (296 aa).

The active-site Proton acceptor is aspartate 72. NAD(+)-binding positions include 72-73 (DG), 146-147 (ND), arginine 157, lysine 174, aspartate 176, 187-192 (TAYALS), and glutamine 247.

Belongs to the NAD kinase family. Requires a divalent metal cation as cofactor.

The protein localises to the cytoplasm. The enzyme catalyses NAD(+) + ATP = ADP + NADP(+) + H(+). Its function is as follows. Involved in the regulation of the intracellular balance of NAD and NADP, and is a key enzyme in the biosynthesis of NADP. Catalyzes specifically the phosphorylation on 2'-hydroxyl of the adenosine moiety of NAD to yield NADP. This chain is NAD kinase, found in Pseudomonas syringae pv. syringae (strain B728a).